Here is a 921-residue protein sequence, read N- to C-terminus: Bifunctional aspartokinase/homoserine dehydrogenase, chloroplastic (921 aa).

Residues 1–87 (SLSSAISPSS…DDSVEKVHLP (87 aa)) constitute a chloroplast transit peptide. Positions 88-339 (RGAMWSIHKF…VSEAVVLKTL (252 aa)) are aspartokinase. Positions 340–567 (SYQEAWEMSY…LSRTTIAVGI (228 aa)) are interface. ACT domains lie at 417–489 (VEGT…QVAN) and 498–575 (TVGQ…LIGA). The tract at residues 568-921 (VGPGLIGATL…RLASYLGAPS (354 aa)) is homoserine dehydrogenase. Isoleucine 573 contacts NAD(+). Residues isoleucine 573, arginine 605, threonine 654, and lysine 678 each contribute to the NADP(+) site. Isoleucine 573 lines the NADPH pocket. Position 654 (threonine 654) interacts with NAD(+). The NADPH site is built by threonine 654 and lysine 678. Residues glutamate 705, valine 708, alanine 710, and leucine 712 each coordinate Na(+). NADP(+)-binding residues include glycine 763 and glutamate 766. L-homoserine-binding residues include glutamate 766 and aspartate 777. Lysine 781 functions as the Proton donor in the catalytic mechanism. Glycine 898 provides a ligand contact to NAD(+). Residue glycine 898 coordinates NADP(+). Glycine 898 is an NADPH binding site.

The protein in the N-terminal section; belongs to the aspartokinase family. In the C-terminal section; belongs to the homoserine dehydrogenase family. Requires a metal cation as cofactor.

The protein localises to the plastid. It localises to the chloroplast. It carries out the reaction L-homoserine + NADP(+) = L-aspartate 4-semialdehyde + NADPH + H(+). The catalysed reaction is L-homoserine + NAD(+) = L-aspartate 4-semialdehyde + NADH + H(+). It catalyses the reaction L-aspartate + ATP = 4-phospho-L-aspartate + ADP. The protein operates within amino-acid biosynthesis; L-lysine biosynthesis via DAP pathway; (S)-tetrahydrodipicolinate from L-aspartate: step 1/4. It participates in amino-acid biosynthesis; L-methionine biosynthesis via de novo pathway; L-homoserine from L-aspartate: step 1/3. Its pathway is amino-acid biosynthesis; L-methionine biosynthesis via de novo pathway; L-homoserine from L-aspartate: step 3/3. It functions in the pathway amino-acid biosynthesis; L-threonine biosynthesis; L-threonine from L-aspartate: step 1/5. The protein operates within amino-acid biosynthesis; L-threonine biosynthesis; L-threonine from L-aspartate: step 3/5. Functionally, bifunctional aspartate kinase and homoserine dehydrogenase that catalyzes the first and the third steps toward the synthesis of lysine, methionine and threonine from aspartate. The sequence is that of Bifunctional aspartokinase/homoserine dehydrogenase, chloroplastic from Daucus carota (Wild carrot).